We begin with the raw amino-acid sequence, 143 residues long: Small ribosomal subunit protein eS19x (143 aa).

Belongs to the eukaryotic ribosomal protein eS19 family.

The sequence is that of Small ribosomal subunit protein eS19x (RPS19C) from Arabidopsis thaliana (Mouse-ear cress).